The following is a 631-amino-acid chain: Leucine aminopeptidase 2-2 (631 aa).

Residues 140–142 (QCQ) and 265–270 (PYGGME) each bind substrate. A Zn(2+)-binding site is contributed by histidine 294. Glutamate 295 (proton acceptor) is an active-site residue. Zn(2+) is bound by residues histidine 298 and glutamate 317. The Proton donor role is filled by tyrosine 395.

Belongs to the peptidase M1 family. It depends on Zn(2+) as a cofactor.

The protein localises to the cytoplasm. Its subcellular location is the nucleus. The catalysed reaction is an epoxide + H2O = an ethanediol. In terms of biological role, aminopeptidase that preferentially cleaves di- and tripeptides. Also has low epoxide hydrolase activity (in vitro). Can hydrolyze the epoxide leukotriene LTA(4) but it forms preferentially 5,6-dihydroxy-7,9,11,14-eicosatetraenoic acid rather than the cytokine leukotriene B(4) as the product compared to the homologous mammalian enzyme (in vitro). This Meyerozyma guilliermondii (strain ATCC 6260 / CBS 566 / DSM 6381 / JCM 1539 / NBRC 10279 / NRRL Y-324) (Yeast) protein is Leucine aminopeptidase 2-2.